Reading from the N-terminus, the 504-residue chain is Protein DETOXIFICATION 38 (504 aa).

Transmembrane regions (helical) follow at residues 56–76, 90–110, 139–159, 170–190, 208–228, 234–254, 273–295, 316–336, 356–376, 401–421, 433–453, and 457–477; these read LLLRLALPAILVYLINGGMGI, LAAASIGNSSFSLVYALMLGM, IVLALVGFPMTILYTFSYPIL, YMGSLYIAGLIPQIFAYAVYF, ISAAALVLQISLTWITVYAMG, IAYVLTISWWFIVGAQTFYVI, GLWSFFKLSAGSAVMICLELWYT, SICMSISALSFMVSVGFNAAV, TWTATFVSFVISVVEALVVIA, FLAVTIILNGIQPVLSGVAVG, IGCYYIVGIPIGCILGFTFNF, and GIWTGMIGGTLMQTLILLYVT.

It belongs to the multi antimicrobial extrusion (MATE) (TC 2.A.66.1) family.

The protein resides in the membrane. The sequence is that of Protein DETOXIFICATION 38 from Arabidopsis thaliana (Mouse-ear cress).